The primary structure comprises 435 residues: Methylenetetrahydrofolate--tRNA-(uracil-5-)-methyltransferase TrmFO (435 aa).

FAD is bound at residue 9 to 14 (GAGLAG).

This sequence belongs to the MnmG family. TrmFO subfamily. FAD is required as a cofactor.

The protein resides in the cytoplasm. The catalysed reaction is uridine(54) in tRNA + (6R)-5,10-methylene-5,6,7,8-tetrahydrofolate + NADH + H(+) = 5-methyluridine(54) in tRNA + (6S)-5,6,7,8-tetrahydrofolate + NAD(+). It carries out the reaction uridine(54) in tRNA + (6R)-5,10-methylene-5,6,7,8-tetrahydrofolate + NADPH + H(+) = 5-methyluridine(54) in tRNA + (6S)-5,6,7,8-tetrahydrofolate + NADP(+). Functionally, catalyzes the folate-dependent formation of 5-methyl-uridine at position 54 (M-5-U54) in all tRNAs. In Staphylococcus aureus (strain MRSA252), this protein is Methylenetetrahydrofolate--tRNA-(uracil-5-)-methyltransferase TrmFO.